A 289-amino-acid chain; its full sequence is Ribosomal protein L11 methyltransferase (289 aa).

Residues T134, G155, D177, and N225 each coordinate S-adenosyl-L-methionine.

It belongs to the methyltransferase superfamily. PrmA family.

The protein localises to the cytoplasm. It carries out the reaction L-lysyl-[protein] + 3 S-adenosyl-L-methionine = N(6),N(6),N(6)-trimethyl-L-lysyl-[protein] + 3 S-adenosyl-L-homocysteine + 3 H(+). Methylates ribosomal protein L11. This chain is Ribosomal protein L11 methyltransferase, found in Parasynechococcus marenigrum (strain WH8102).